A 269-amino-acid chain; its full sequence is MRDRLFFLLSKYGIRPNDRIGQHFLIVKDVIDKAIEVAEVSKSDVVLEVGPGLGFLTDELSKRAKKVFTIELDRRIIEILRNEYSWNNVEIIQGDAVKVEWPSFNKVVSNIPYQISSPFTFKLLKMEFERAVVMYQLEFALRMTAKPGDRNYSRLSLMTQALADVEIVMRIGKGAFYPKPKVDSALVLITPKKDRIELNESLVKALFQHRRKVVSKALRESAHMLGIKDVKTVKDILSSVPHSNKRVFHLTPEEVKEIEEYLREHRIIS.

Residues H23, L25, G50, E71, D95, and N110 each contribute to the S-adenosyl-L-methionine site.

It belongs to the class I-like SAM-binding methyltransferase superfamily. rRNA adenine N(6)-methyltransferase family. RsmA subfamily.

It is found in the cytoplasm. Its function is as follows. Specifically dimethylates two adjacent adenosines in the loop of a conserved hairpin near the 3'-end of 16S rRNA in the 30S particle. May play a critical role in biogenesis of 30S subunits. In Pyrococcus abyssi (strain GE5 / Orsay), this protein is Probable ribosomal RNA small subunit methyltransferase A.